Consider the following 147-residue polypeptide: uncharacterized protein (147 aa).

Residues 44–147 enclose the HTH LytTR-type domain; that stretch reads LVGYIDKEIH…LKSIKERLSI (104 aa).

The protein resides in the cytoplasm. This is an uncharacterized protein from Staphylococcus aureus (strain COL).